The chain runs to 179 residues: Large ribosomal subunit protein uL5 (179 aa).

Belongs to the universal ribosomal protein uL5 family. In terms of assembly, part of the 50S ribosomal subunit; part of the 5S rRNA/L5/L18/L25 subcomplex. Contacts the 5S rRNA and the P site tRNA. Forms a bridge to the 30S subunit in the 70S ribosome.

Functionally, this is one of the proteins that bind and probably mediate the attachment of the 5S RNA into the large ribosomal subunit, where it forms part of the central protuberance. In the 70S ribosome it contacts protein S13 of the 30S subunit (bridge B1b), connecting the 2 subunits; this bridge is implicated in subunit movement. Contacts the P site tRNA; the 5S rRNA and some of its associated proteins might help stabilize positioning of ribosome-bound tRNAs. The polypeptide is Large ribosomal subunit protein uL5 (Azotobacter vinelandii (strain DJ / ATCC BAA-1303)).